The chain runs to 251 residues: DNA repair protein RecO (251 aa).

This sequence belongs to the RecO family.

Functionally, involved in DNA repair and RecF pathway recombination. This Streptococcus mutans serotype c (strain ATCC 700610 / UA159) protein is DNA repair protein RecO.